Consider the following 492-residue polypeptide: Proline--tRNA ligase (492 aa).

This sequence belongs to the class-II aminoacyl-tRNA synthetase family. ProS type 3 subfamily. As to quaternary structure, homodimer.

The protein resides in the cytoplasm. The catalysed reaction is tRNA(Pro) + L-proline + ATP = L-prolyl-tRNA(Pro) + AMP + diphosphate. Catalyzes the attachment of proline to tRNA(Pro) in a two-step reaction: proline is first activated by ATP to form Pro-AMP and then transferred to the acceptor end of tRNA(Pro). This chain is Proline--tRNA ligase, found in Flavobacterium psychrophilum (strain ATCC 49511 / DSM 21280 / CIP 103535 / JIP02/86).